A 397-amino-acid chain; its full sequence is Mannitol-1-phosphate 5-dehydrogenase (397 aa).

An NAD(+)-binding site is contributed by 9 to 20 (AVHFGAGNIGRG). Lysine 220 is an active-site residue.

It belongs to the mannitol dehydrogenase family. Monomer.

The enzyme catalyses D-mannitol 1-phosphate + NAD(+) = beta-D-fructose 6-phosphate + NADH + H(+). Functionally, catalyzes the NAD(H)-dependent interconversion of D-fructose 6-phosphate and D-mannitol 1-phosphate in the mannitol metabolic pathway. The chain is Mannitol-1-phosphate 5-dehydrogenase from Podospora anserina (strain S / ATCC MYA-4624 / DSM 980 / FGSC 10383) (Pleurage anserina).